Reading from the N-terminus, the 86-residue chain is Large ribosomal subunit protein bL27c (86 aa).

The tract at residues 1–27 (MAHKKGSGSTRNGRDSNSKRLGVKKYG) is disordered.

This sequence belongs to the bacterial ribosomal protein bL27 family.

It localises to the plastid. It is found in the chloroplast. The chain is Large ribosomal subunit protein bL27c (rpl27) from Porphyra purpurea (Red seaweed).